Here is a 481-residue protein sequence, read N- to C-terminus: Glutamyl-tRNA(Gln) amidotransferase subunit A (481 aa).

Residues Lys-75 and Ser-150 each act as charge relay system in the active site. The active-site Acyl-ester intermediate is Ser-174.

This sequence belongs to the amidase family. GatA subfamily. As to quaternary structure, heterotrimer of A, B and C subunits.

It carries out the reaction L-glutamyl-tRNA(Gln) + L-glutamine + ATP + H2O = L-glutaminyl-tRNA(Gln) + L-glutamate + ADP + phosphate + H(+). In terms of biological role, allows the formation of correctly charged Gln-tRNA(Gln) through the transamidation of misacylated Glu-tRNA(Gln) in organisms which lack glutaminyl-tRNA synthetase. The reaction takes place in the presence of glutamine and ATP through an activated gamma-phospho-Glu-tRNA(Gln). This Macrococcus caseolyticus (strain JCSC5402) (Macrococcoides caseolyticum) protein is Glutamyl-tRNA(Gln) amidotransferase subunit A.